Reading from the N-terminus, the 374-residue chain is Chaperone protein DnaJ (374 aa).

The J domain maps to 5-70 (DFYEILGVGK…QKRDAYDRYG (66 aa)). Positions 29 to 50 (AMKHHPDRNPDSKGAEDKFKEA) are disordered. Positions 35–50 (DRNPDSKGAEDKFKEA) are enriched in basic and acidic residues. The CR-type zinc finger occupies 134–212 (GYDTTIRVPS…CSGAGKIKRN (79 aa)). Zn(2+) is bound by residues Cys147, Cys150, Cys164, Cys167, Cys186, Cys189, Cys200, and Cys203. 4 CXXCXGXG motif repeats span residues 147-154 (CETCDGSG), 164-171 (CTTCGGHG), 186-193 (CPKCHGSG), and 200-207 (CGTCSGAG).

The protein belongs to the DnaJ family. Homodimer. Zn(2+) serves as cofactor.

Its subcellular location is the cytoplasm. Its function is as follows. Participates actively in the response to hyperosmotic and heat shock by preventing the aggregation of stress-denatured proteins and by disaggregating proteins, also in an autonomous, DnaK-independent fashion. Unfolded proteins bind initially to DnaJ; upon interaction with the DnaJ-bound protein, DnaK hydrolyzes its bound ATP, resulting in the formation of a stable complex. GrpE releases ADP from DnaK; ATP binding to DnaK triggers the release of the substrate protein, thus completing the reaction cycle. Several rounds of ATP-dependent interactions between DnaJ, DnaK and GrpE are required for fully efficient folding. Also involved, together with DnaK and GrpE, in the DNA replication of plasmids through activation of initiation proteins. This chain is Chaperone protein DnaJ, found in Janthinobacterium sp. (strain Marseille) (Minibacterium massiliensis).